The primary structure comprises 297 residues: ER membrane protein complex subunit 2 (297 aa).

The residue at position 2 (alanine 2) is an N-acetylalanine. 3 TPR repeats span residues 87–120 (HRVK…DPTN), 155–188 (QEAW…NPHN), and 192–225 (CQQY…NNRN). Lysine 255 carries the post-translational modification N6-acetyllysine.

It belongs to the EMC2 family. In terms of assembly, component of the ER membrane protein complex (EMC). Interacts with WNK1 (via amphipathic alpha-helix region); promoting the ER membrane protein complex assembly by preventing EMC2 ubiquitination. Ubiquitinated when soluble in the cytoplasm, leading to its degradation by the proteasome. Interaction with EMC2 prevents its ubiquitination and degradation.

The protein resides in the endoplasmic reticulum membrane. Its function is as follows. Part of the endoplasmic reticulum membrane protein complex (EMC) that enables the energy-independent insertion into endoplasmic reticulum membranes of newly synthesized membrane proteins. Preferentially accommodates proteins with transmembrane domains that are weakly hydrophobic or contain destabilizing features such as charged and aromatic residues. Involved in the cotranslational insertion of multi-pass membrane proteins in which stop-transfer membrane-anchor sequences become ER membrane spanning helices. It is also required for the post-translational insertion of tail-anchored/TA proteins in endoplasmic reticulum membranes. By mediating the proper cotranslational insertion of N-terminal transmembrane domains in an N-exo topology, with translocated N-terminus in the lumen of the ER, controls the topology of multi-pass membrane proteins like the G protein-coupled receptors. By regulating the insertion of various proteins in membranes, it is indirectly involved in many cellular processes. In Pongo abelii (Sumatran orangutan), this protein is ER membrane protein complex subunit 2.